Reading from the N-terminus, the 156-residue chain is Pilin-like protein PilA1 (156 aa).

A propeptide spans 1–5 (MTRRG) (leader sequence). Leu6 is subject to N-methylleucine. A helical membrane pass occupies residues 6 to 29 (LTLLELLLVLGILGVLLGLALPLL).

The protein localises to the cell inner membrane. It is found in the cell outer membrane. Its subcellular location is the periplasm. Plays an essential role in natural DNA transformation but is not required for pilus biogenesis. The polypeptide is Pilin-like protein PilA1 (pilA1) (Thermus thermophilus (strain ATCC BAA-163 / DSM 7039 / HB27)).